The following is a 387-amino-acid chain: Mannitol-1-phosphate 5-dehydrogenase (387 aa).

Residue 3 to 14 (AVHFGAGNIGRG) coordinates NAD(+).

This sequence belongs to the mannitol dehydrogenase family.

The enzyme catalyses D-mannitol 1-phosphate + NAD(+) = beta-D-fructose 6-phosphate + NADH + H(+). The sequence is that of Mannitol-1-phosphate 5-dehydrogenase from Pseudarthrobacter chlorophenolicus (strain ATCC 700700 / DSM 12829 / CIP 107037 / JCM 12360 / KCTC 9906 / NCIMB 13794 / A6) (Arthrobacter chlorophenolicus).